Here is a 145-residue protein sequence, read N- to C-terminus: MADRLTQLQDAVNSLADQFCNAIGVLQQCAPPASFSNIQTAINKDQPSNPTEEYAQLFAALIARTAKDVDVLIDSLPSEESTAALQAASLRQLEEENQEAAARLEEVVYRGDALLEKIQTALADIAQSQLRTRSGAPSQQTPPES.

The stretch at 79–112 (EESTAALQAASLRQLEEENQEAAARLEEVVYRGD) forms a coiled coil.

This sequence belongs to the Mediator complex subunit 21 family. In terms of assembly, component of the Mediator complex.

The protein resides in the nucleus. Its function is as follows. Component of the Mediator complex, a coactivator involved in the regulated transcription of nearly all RNA polymerase II-dependent genes. Mediator functions as a bridge to convey information from gene-specific regulatory proteins to the basal RNA polymerase II transcription machinery. Mediator is recruited to promoters by direct interactions with regulatory proteins and serves as a scaffold for the assembly of a functional preinitiation complex with RNA polymerase II and the general transcription factors. This Danio rerio (Zebrafish) protein is Mediator of RNA polymerase II transcription subunit 21 (med21).